The sequence spans 958 residues: MLRSKTFLKKTRAGGVVKIVREHYLRDDIGCGAPACSACGGAHAGPALELQPRDQASSLCPWPHYLLPDTNVLLHQIDVLEHPAIRNVIVLQTVMQEVRNRSAPIYKRIRDVTNNQEKHFYTFTNEHHKETYIEQEQGENANDRNDRAIRVAAKWYNEHLKRVAADSQLQVILITNDRKNKEKAVQEGIPAFTCEEYVKSLTANPELIDRLAYLSDEMNEIESGKIIFSEHLPLSKLQQGIKSGSYLQGTFRASRENYLEATVWIHGDKEEEKEILIQGIKHLNRAVHEDIVAVELLPRSQWVAPSSVVLDDEGQNEDDVEKDEERELLLKTAVSEKMLRPTGRVVGIIKRNWRPYCGMLSKSDIKESRRHLFTPADKRIPRIRIETRQASALEGRRIIVAIDGWPRNSRYPNGHFVKNLGDVGEKETETEVLLLEHDVPHQPFSQAVLSFLPRMPWSITEEDMKNREDLRHLCVCSVDPPGCTDIDDALHCRELSNGNLEVGVHIADVSHFIRPGNALDQESARRGTTVYLCEKRIDMVPELLSSNLCSLRSNVDRLAFSCIWEMNHNAEILKTRFTKSVINSKASLTYAEAQMRIDSAAMNDDITTSLRGLNQLAKILKKGRIEKGALTLSSPEIRFHMDSETHDPIDLQTKELRETNSMVEEFMLLANISVAKKIHEEFSEHALLRKHPAPPPSNYDILVKAAKSKNLQIKTDTAKSLADSLDRAESPDFPYLNTLLRILATRCMMQAVYFCSGMDNDFHHYGLASPIYTHFTSPIRRYADIIVHRLLAVAIGADCTYPELTDKHKLSDICKNLNFRHKMAQYAQRASVAFHTQLFFKSKGIVSEEAYILFVRKNAIVVLIPKYGLEGTVFFEEKDKPKPRLAYDDEIPSLRIEGTVFHVFDKVKVKITLDSSNLQHQKIRMALVEPQIPGINIPPNVADKALTAPGGKKRKLEK.

Position 1 is an N-acetylmethionine (Met1). The residue at position 18 (Lys18) is an N6-acetyllysine. A PINc domain is found at 64–182 (HYLLPDTNVL…LITNDRKNKE (119 aa)). Ser215 carries the post-translational modification Phosphoserine. The region spanning 227 to 319 (IFSEHLPLSK…LDDEGQNEDD (93 aa)) is the CSD1 domain. The CSD2 domain occupies 372-438 (LFTPADKRIP…ETEVLLLEHD (67 aa)). One can recognise an RNB domain in the interval 467–792 (REDLRHLCVC…ADIIVHRLLA (326 aa)).

Belongs to the RNR ribonuclease family. In terms of assembly, component of the RNA exosome complex; within the complex interacts with EXOSC4, EXOSC7 and EXOSC9 of the exosome core complex (Exo-9). The catalytically inactive RNA exosome core complex (Exo-9) associates with the catalytic subunit EXOSC10/RRP6. Exo-9 may associate with DIS3 to form the nucleolar exosome complex, or DIS3L to form the cytoplasmic exosome complex. Exo-9 is formed by a hexameric base ring consisting of the heterodimers EXOSC4-EXOSC9, EXOSC5-EXOSC8 and EXOSC6-EXOSC7, and a cap ring consisting of EXOSC1, EXOSC2 and EXOSC3; DIS3 associates with the base ring of Exo-9. The RNA exosome complex associates with cofactors C1D/RRP47, MPHOSPH6/MPP6 and MTREX/MTR4. Interacts with DHX34; the interaction is RNA-independent. It depends on Mg(2+) as a cofactor. Mn(2+) is required as a cofactor.

The protein localises to the cytoplasm. The protein resides in the nucleus. It localises to the nucleolus. Its subcellular location is the nucleoplasm. Its function is as follows. Putative catalytic component of the RNA exosome complex which has 3'-&gt;5' exoribonuclease activity and participates in a multitude of cellular RNA processing and degradation events. In the nucleus, the RNA exosome complex is involved in proper maturation of stable RNA species such as rRNA, snRNA and snoRNA, in the elimination of RNA processing by-products and non-coding 'pervasive' transcripts, such as antisense RNA species and promoter-upstream transcripts (PROMPTs), and of mRNAs with processing defects, thereby limiting or excluding their export to the cytoplasm. The RNA exosome may be involved in Ig class switch recombination (CSR) and/or Ig variable region somatic hypermutation (SHM) by targeting AICDA deamination activity to transcribed dsDNA substrates. In the cytoplasm, the RNA exosome complex is involved in general mRNA turnover and specifically degrades inherently unstable mRNAs containing AU-rich elements (AREs) within their 3' untranslated regions, and in RNA surveillance pathways, preventing translation of aberrant mRNAs. It seems to be involved in degradation of histone mRNA. DIS3 has both 3'-5' exonuclease and endonuclease activities. The polypeptide is Exosome complex exonuclease RRP44 (Dis3) (Mus musculus (Mouse)).